A 220-amino-acid chain; its full sequence is Pyridoxine/pyridoxamine 5'-phosphate oxidase (220 aa).

FMN contacts are provided by residues 69 to 74 (RVVLLK), 84 to 85 (YT), Arg-90, Lys-91, and Gln-113. Lys-74 is a binding site for substrate. Residues Tyr-131, Arg-135, and Ser-139 each contribute to the substrate site. FMN is bound by residues 148–149 (QS) and Trp-193. Position 199–201 (199–201 (RLH)) interacts with substrate. Residue Arg-203 coordinates FMN.

The protein belongs to the pyridoxamine 5'-phosphate oxidase family. In terms of assembly, homodimer. FMN serves as cofactor.

The catalysed reaction is pyridoxamine 5'-phosphate + O2 + H2O = pyridoxal 5'-phosphate + H2O2 + NH4(+). The enzyme catalyses pyridoxine 5'-phosphate + O2 = pyridoxal 5'-phosphate + H2O2. It participates in cofactor metabolism; pyridoxal 5'-phosphate salvage; pyridoxal 5'-phosphate from pyridoxamine 5'-phosphate: step 1/1. The protein operates within cofactor metabolism; pyridoxal 5'-phosphate salvage; pyridoxal 5'-phosphate from pyridoxine 5'-phosphate: step 1/1. Its function is as follows. Catalyzes the oxidation of either pyridoxine 5'-phosphate (PNP) or pyridoxamine 5'-phosphate (PMP) into pyridoxal 5'-phosphate (PLP). The polypeptide is Pyridoxine/pyridoxamine 5'-phosphate oxidase (Myxococcus xanthus).